The primary structure comprises 393 residues: Bifunctional enzyme Fae/Hps (393 aa).

The segment at 1–161 (MYLVGEALIG…YEKDRAAHGI (161 aa)) is formaldehyde-activating enzyme. The active-site Proton donor is the His-17. 5 residues coordinate substrate: Asp-19, Leu-48, Lys-66, Thr-68, and Gln-83. A 3-hexulose-6-phosphate synthase region spans residues 162 to 393 (MGFKVQRLWD…IDQFRIMTDF (232 aa)).

In the N-terminal section; belongs to the formaldehyde-activating enzyme family. The protein in the C-terminal section; belongs to the HPS/KGPDC family. HPS subfamily.

It catalyses the reaction 5,6,7,8-tetrahydromethanopterin + formaldehyde = 5,10-methylenetetrahydromethanopterin + H2O. The catalysed reaction is D-ribulose 5-phosphate + formaldehyde = D-arabino-hex-3-ulose 6-phosphate. It functions in the pathway carbohydrate biosynthesis; D-ribose 5-phosphate biosynthesis. Functionally, catalyzes the condensation of formaldehyde with tetrahydromethanopterin (H(4)MPT) to 5,10-methylenetetrahydromethanopterin. Catalyzes the reversible formation of ribulose-5-phosphate and formaldehyde from 3-hexulose-6-phosphate. The polypeptide is Bifunctional enzyme Fae/Hps (Methanoregula boonei (strain DSM 21154 / JCM 14090 / 6A8)).